We begin with the raw amino-acid sequence, 20 residues long: Dentinal fluid transport-stimulating peptide (20 aa).

Residues 1 to 20 (GVIAWELQHNEPGRKDSTAG) are disordered. Over residues 8 to 20 (QHNEPGRKDSTAG) the composition is skewed to basic and acidic residues.

Its function is as follows. This peptide stimulates the transport of dentinal fluid, which is important for the prevention of dental caries. The polypeptide is Dentinal fluid transport-stimulating peptide (Rattus norvegicus (Rat)).